A 408-amino-acid chain; its full sequence is MDKLLERFLNYVSLDTQSKAGVRQVPSTEGQWKLLHLLKEQLEEMGLINVTLSEKGTLMATLPANVPGDIPAIGFISHVDTSPDCSGKNVNPQIVENYRGGDIALGIGDEVLSPVMFPVLHQLLGQTLITTDGKTLLGADDKAGIAEIMTALAVLQQKKIPHGDIRVAFTPDEEVGKGAKHFDVDAFDARWAYTVDGGGVGELEFENFNAASVNIKIVGNNVHPGTAKGVMVNALSLAARIHAEVPADESPEMTEGYEGFYHLASMKGTVERADMHYIIRDFDRKQFEARKRKMMEIAKKVGKGLHPDCYIELVIEDSYYNMREKVVEHPHILDIAQQAMRDCDIEPELKPIRGGTDGAQLSFMGLPCPNLFTGGYNYHGKHEFVTLEGMEKAVQVIVRIAELTAQRK.

Zn(2+) is bound at residue His-78. Asp-80 is an active-site residue. Asp-140 provides a ligand contact to Zn(2+). Glu-173 serves as the catalytic Proton acceptor. Zn(2+) contacts are provided by Glu-174, Asp-196, and His-379.

This sequence belongs to the peptidase M20B family. Zn(2+) serves as cofactor.

Its subcellular location is the cytoplasm. It catalyses the reaction Release of the N-terminal residue from a tripeptide.. In terms of biological role, cleaves the N-terminal amino acid of tripeptides. This Escherichia coli (strain K12 / MC4100 / BW2952) protein is Peptidase T.